Consider the following 229-residue polypeptide: Cytidylate kinase (229 aa).

7–15 (GPAGAGKSS) contributes to the ATP binding site.

The protein belongs to the cytidylate kinase family. Type 1 subfamily.

The protein resides in the cytoplasm. It catalyses the reaction CMP + ATP = CDP + ADP. The enzyme catalyses dCMP + ATP = dCDP + ADP. This Rhodopirellula baltica (strain DSM 10527 / NCIMB 13988 / SH1) protein is Cytidylate kinase.